A 175-amino-acid chain; its full sequence is Myosin regulatory light chain 2, atrial isoform (175 aa).

Position 2 is an N-acetylalanine (alanine 2). Residues serine 22 and serine 23 each carry the phosphoserine modification. 3 consecutive EF-hand domains span residues 32-67, 102-137, and 138-173; these read AQIQ…LGKV, DPEE…QADK, and FSPA…GDEK. Residues aspartate 45, asparagine 47, aspartate 49, and aspartate 56 each contribute to the Ca(2+) site.

As to quaternary structure, myosin is a hexamer of 2 heavy chains and 4 light chains. In terms of tissue distribution, predominantly expressed in adult atrial muscle.

The protein is Myosin regulatory light chain 2, atrial isoform (MYL7) of Homo sapiens (Human).